Reading from the N-terminus, the 109-residue chain is Cysteine-rich venom protein 7 (109 aa).

Residues 1–21 (MSKVFVIILVALMVAISIASA) form the signal peptide. 5 disulfides stabilise this stretch: Cys30–Cys47, Cys37–Cys52, Cys46–Cys58, Cys70–Cys90, and Cys78–Cys98.

In terms of tissue distribution, expressed by the venom gland.

The protein resides in the secreted. This Pimpla hypochondriaca (Parasitoid wasp) protein is Cysteine-rich venom protein 7.